A 675-amino-acid polypeptide reads, in one-letter code: E3 ubiquitin-protein ligase COP1 (675 aa).

The segment at 1 to 40 (MEEISTDPVVPAVKPDPRTSSVGEGANRHENDDGGSGGSE) is disordered. Residues C52, C55, C67, H69, C72, C75, C86, and C89 each coordinate Zn(2+). The RING-type zinc-finger motif lies at 52 to 90 (CPICMQIIKDAFLTACGHSFCYMCIITHLRNKSDCPCCS). A CLS (cytoplasmic localization signal) region spans residues 67 to 177 (CGHSFCYMCI…LDFLHCLRKQ (111 aa)). Residues 120 to 177 (ASPLDQFREALQRGCDVSIKEVDNLLTLLAERKRKMEQEEAERNMQILLDFLHCLRKQ) are SNLS (subnuclear localization signal). The stretch at 134-201 (CDVSIKEVDN…IKEDINAVER (68 aa)) forms a coiled coil. Residues 261-290 (EGKAQGSSHGLPKKDALSGSDSQSLNQSTV) form a disordered region. The segment covering 279 to 290 (GSDSQSLNQSTV) has biased composition (polar residues). The Bipartite nuclear localization signal motif lies at 294–317 (RKKRIHAQFNDLQECYLQKRRQLA). WD repeat units lie at residues 369–408 (HSAN…NEPA), 418–458 (STRS…SLME), 461–501 (EHEK…SVIN), 503–543 (DMKA…QPLH), 547–585 (GHKK…PVRT), 588–627 (GHTN…PVTS), and 642–675 (AGSY…VLAA). A binding of human TRIB1 COP1-binding-motif region spans residues 593–595 (KNF).

Homodimer. Interacts with HY5, HYH, BBX24/STO, BBX25/STH, CIP8, COP10, SPA1, SPA2, SPA3, SPA4 and UVR8 and phosphorylated PHYA. Light induces dissociation of the SPA1/COP1 complex. Interacts with HRT/RPP8 and triggers it to the 26s proteasome. Binds to CRY2; this competitive interaction prevents triggering to proteasome of other binding proteins. Binds to SHW1 in the nucleus. Bonds to CIP7. Interacts with CSU2. Binds to CIP1. Interacts directly with DHU1. Associates to UNE10/PIF8. Binds directly to PCH1 and PCHL. Autoubiquitinated.

The protein resides in the nucleus. Its subcellular location is the cytoplasm. It carries out the reaction S-ubiquitinyl-[E2 ubiquitin-conjugating enzyme]-L-cysteine + [acceptor protein]-L-lysine = [E2 ubiquitin-conjugating enzyme]-L-cysteine + N(6)-ubiquitinyl-[acceptor protein]-L-lysine.. Its pathway is protein modification; protein ubiquitination. Its function is as follows. E3 ubiquitin-protein ligase that acts as a repressor of photomorphogenesis and as an activator of etiolation in darkness. E3 ubiquitin ligases accept ubiquitin from an E2 ubiquitin-conjugating enzyme in the form of a thioester and then directly transfers the ubiquitin to targeted substrates. Represses photomorphogenesis in darkness by mediating ubiquitination and subsequent proteasomal degradation of light-induced transcription factors such as HY5, HYH and LAF1. Down-regulates MYB21, probably via ubiquitination process. Light stimuli abrogate the repression of photomorphogenesis, possibly due to its localization to the cytoplasm. Could play a role in switching between skotomorphogenetic and photomorphogenetic pathways. Mediates the ubiquitination-dependent degradation of HY5 in the darkness during seedling development (e.g. hypocotyl growth). Represses CIP7 in darkness. Triggers ubiquitination and subsequent protein degradation of UNE10/PIF8, PCH1 and PCHL in the dark. This is E3 ubiquitin-protein ligase COP1 from Arabidopsis thaliana (Mouse-ear cress).